The chain runs to 225 residues: Uracil-DNA glycosylase (225 aa).

Catalysis depends on Asp65, which acts as the Proton acceptor.

Belongs to the uracil-DNA glycosylase (UDG) superfamily. UNG family.

The protein resides in the cytoplasm. The catalysed reaction is Hydrolyzes single-stranded DNA or mismatched double-stranded DNA and polynucleotides, releasing free uracil.. Functionally, excises uracil residues from the DNA which can arise as a result of misincorporation of dUMP residues by DNA polymerase or due to deamination of cytosine. The chain is Uracil-DNA glycosylase from Clostridium perfringens (strain SM101 / Type A).